We begin with the raw amino-acid sequence, 135 residues long: MAVKIRLKRLGKIRAPYYRIVVADSRAKRDGRVIEEIGKYHPTEEPSFIEVQSERAQYWLSVGAQPTEQVEALLKLTGDWGRFKGDKDAVSTVRTREAKPAYVADEKKKPVLKPKTEKAAPEAAAPEAEATEEQA.

Positions aspartate 105–alanine 120 are enriched in basic and acidic residues. Positions aspartate 105–alanine 135 are disordered.

This sequence belongs to the bacterial ribosomal protein bS16 family.

In Clavibacter sepedonicus (Clavibacter michiganensis subsp. sepedonicus), this protein is Small ribosomal subunit protein bS16.